The sequence spans 188 residues: Small ribosomal subunit protein uS7 (188 aa).

Belongs to the universal ribosomal protein uS7 family. Part of the 30S ribosomal subunit.

Its function is as follows. One of the primary rRNA binding proteins, it binds directly to 16S rRNA where it nucleates assembly of the head domain of the 30S subunit. Is located at the subunit interface close to the decoding center. The protein is Small ribosomal subunit protein uS7 of Methanococcus aeolicus (strain ATCC BAA-1280 / DSM 17508 / OCM 812 / Nankai-3).